The primary structure comprises 550 residues: Chaperonin GroEL (550 aa).

Residues 30–33 (TLGP), K51, 87–91 (DGTTT), G415, 480–482 (NAA), and D496 each bind ATP.

Belongs to the chaperonin (HSP60) family. In terms of assembly, forms a cylinder of 14 subunits composed of two heptameric rings stacked back-to-back. Interacts with the co-chaperonin GroES.

Its subcellular location is the cytoplasm. The enzyme catalyses ATP + H2O + a folded polypeptide = ADP + phosphate + an unfolded polypeptide.. Its function is as follows. Together with its co-chaperonin GroES, plays an essential role in assisting protein folding. The GroEL-GroES system forms a nano-cage that allows encapsulation of the non-native substrate proteins and provides a physical environment optimized to promote and accelerate protein folding. The sequence is that of Chaperonin GroEL from Variovorax paradoxus (strain S110).